A 148-amino-acid chain; its full sequence is Transcriptional regulator MraZ (148 aa).

SpoVT-AbrB domains are found at residues 5–51 (STQL…PQPV) and 80–123 (ASDV…DMAK).

It belongs to the MraZ family. As to quaternary structure, forms oligomers.

Its subcellular location is the cytoplasm. It is found in the nucleoid. In Nitrosomonas europaea (strain ATCC 19718 / CIP 103999 / KCTC 2705 / NBRC 14298), this protein is Transcriptional regulator MraZ.